Here is a 603-residue protein sequence, read N- to C-terminus: Methionine--tRNA ligase (603 aa).

A 'HIGH' region motif is present at residues 14-24 (PYANGPRHIGH). 4 residues coordinate Zn(2+): Cys146, Cys149, Cys159, and Cys162. The 'KMSKS' region motif lies at 354–358 (KFSSS). ATP is bound at residue Ser357.

Belongs to the class-I aminoacyl-tRNA synthetase family. MetG type 1 subfamily. Monomer. Zn(2+) is required as a cofactor.

The protein resides in the cytoplasm. The enzyme catalyses tRNA(Met) + L-methionine + ATP = L-methionyl-tRNA(Met) + AMP + diphosphate. In terms of biological role, is required not only for elongation of protein synthesis but also for the initiation of all mRNA translation through initiator tRNA(fMet) aminoacylation. This is Methionine--tRNA ligase from Salinispora tropica (strain ATCC BAA-916 / DSM 44818 / JCM 13857 / NBRC 105044 / CNB-440).